The following is a 354-amino-acid chain: Homeobox protein Nkx-2.4 (354 aa).

The homeobox DNA-binding region spans 189 to 248 (RRKRRVLFSQAQVYELERRFKQQKYLSAPEREHLASMIHLTPTQVKIWFQNHRYKMKRQA). The tract at residues 246 to 329 (RQAKDKAAQQ…PALHGPGGGL (84 aa)) is disordered. The segment covering 263 to 272 (GPPPPPPPSP) has biased composition (pro residues).

The protein belongs to the NK-2 homeobox family.

It localises to the nucleus. Probable transcription factor. In Homo sapiens (Human), this protein is Homeobox protein Nkx-2.4 (NKX2-4).